We begin with the raw amino-acid sequence, 167 residues long: Lipoprotein signal peptidase (167 aa).

3 consecutive transmembrane segments (helical) span residues 10–30 (LIWLLLSIAIIALDQATKAWV), 68–88 (WQMWLFIALALGISGLLTFWL), and 98–118 (SALPYALIIGGGIGNVIDRFL). Active-site residues include aspartate 124 and aspartate 142. Residues 138–158 (FNLADSAIVAGAIGIGLLSLF) form a helical membrane-spanning segment.

Belongs to the peptidase A8 family.

The protein resides in the cell inner membrane. It catalyses the reaction Release of signal peptides from bacterial membrane prolipoproteins. Hydrolyzes -Xaa-Yaa-Zaa-|-(S,diacylglyceryl)Cys-, in which Xaa is hydrophobic (preferably Leu), and Yaa (Ala or Ser) and Zaa (Gly or Ala) have small, neutral side chains.. The protein operates within protein modification; lipoprotein biosynthesis (signal peptide cleavage). Functionally, this protein specifically catalyzes the removal of signal peptides from prolipoproteins. The protein is Lipoprotein signal peptidase of Xylella fastidiosa (strain M23).